We begin with the raw amino-acid sequence, 166 residues long: Small ribosomal subunit protein uS5 (166 aa).

Residues 12-75 (YIEKLVQVNR…EAARRNMIQV (64 aa)) form the S5 DRBM domain.

Belongs to the universal ribosomal protein uS5 family. As to quaternary structure, part of the 30S ribosomal subunit. Contacts proteins S4 and S8.

With S4 and S12 plays an important role in translational accuracy. Functionally, located at the back of the 30S subunit body where it stabilizes the conformation of the head with respect to the body. The sequence is that of Small ribosomal subunit protein uS5 from Pseudomonas fluorescens (strain ATCC BAA-477 / NRRL B-23932 / Pf-5).